The sequence spans 212 residues: Methylthioribulose-1-phosphate dehydratase (212 aa).

Zn(2+) is bound by residues His-97 and His-99.

The protein belongs to the aldolase class II family. MtnB subfamily. In terms of assembly, homotetramer. Requires Zn(2+) as cofactor.

It catalyses the reaction 5-(methylsulfanyl)-D-ribulose 1-phosphate = 5-methylsulfanyl-2,3-dioxopentyl phosphate + H2O. Its pathway is amino-acid biosynthesis; L-methionine biosynthesis via salvage pathway; L-methionine from S-methyl-5-thio-alpha-D-ribose 1-phosphate: step 2/6. In terms of biological role, catalyzes the dehydration of methylthioribulose-1-phosphate (MTRu-1-P) into 2,3-diketo-5-methylthiopentyl-1-phosphate (DK-MTP-1-P). The polypeptide is Methylthioribulose-1-phosphate dehydratase (Bacillus cytotoxicus (strain DSM 22905 / CIP 110041 / 391-98 / NVH 391-98)).